The sequence spans 355 residues: UDP-N-acetylglucosamine--N-acetylmuramyl-(pentapeptide) pyrophosphoryl-undecaprenol N-acetylglucosamine transferase (355 aa).

UDP-N-acetyl-alpha-D-glucosamine is bound by residues 15–17 (TGG), N127, R163, S191, I244, 263–268 (ALTVSE), and Q288.

Belongs to the glycosyltransferase 28 family. MurG subfamily.

The protein localises to the cell inner membrane. It catalyses the reaction di-trans,octa-cis-undecaprenyl diphospho-N-acetyl-alpha-D-muramoyl-L-alanyl-D-glutamyl-meso-2,6-diaminopimeloyl-D-alanyl-D-alanine + UDP-N-acetyl-alpha-D-glucosamine = di-trans,octa-cis-undecaprenyl diphospho-[N-acetyl-alpha-D-glucosaminyl-(1-&gt;4)]-N-acetyl-alpha-D-muramoyl-L-alanyl-D-glutamyl-meso-2,6-diaminopimeloyl-D-alanyl-D-alanine + UDP + H(+). The protein operates within cell wall biogenesis; peptidoglycan biosynthesis. Cell wall formation. Catalyzes the transfer of a GlcNAc subunit on undecaprenyl-pyrophosphoryl-MurNAc-pentapeptide (lipid intermediate I) to form undecaprenyl-pyrophosphoryl-MurNAc-(pentapeptide)GlcNAc (lipid intermediate II). This is UDP-N-acetylglucosamine--N-acetylmuramyl-(pentapeptide) pyrophosphoryl-undecaprenol N-acetylglucosamine transferase from Salmonella arizonae (strain ATCC BAA-731 / CDC346-86 / RSK2980).